Here is a 148-residue protein sequence, read N- to C-terminus: UPF0134 protein MPN_204 (148 aa).

This sequence belongs to the UPF0134 family.

The polypeptide is UPF0134 protein MPN_204 (Mycoplasma pneumoniae (strain ATCC 29342 / M129 / Subtype 1) (Mycoplasmoides pneumoniae)).